The chain runs to 589 residues: Aspartate--tRNA ligase (589 aa).

Glu-174 contributes to the L-aspartate binding site. The segment at 198 to 201 (QLFK) is aspartate. L-aspartate is bound at residue Arg-220. ATP contacts are provided by residues 220 to 222 (RDE) and Gln-229. His-448 lines the L-aspartate pocket. Glu-484 lines the ATP pocket. L-aspartate is bound at residue Arg-491. 536–539 (GLDR) is a binding site for ATP.

It belongs to the class-II aminoacyl-tRNA synthetase family. Type 1 subfamily. As to quaternary structure, homodimer.

Its subcellular location is the cytoplasm. It carries out the reaction tRNA(Asp) + L-aspartate + ATP = L-aspartyl-tRNA(Asp) + AMP + diphosphate. In terms of biological role, catalyzes the attachment of L-aspartate to tRNA(Asp) in a two-step reaction: L-aspartate is first activated by ATP to form Asp-AMP and then transferred to the acceptor end of tRNA(Asp). This is Aspartate--tRNA ligase from Leuconostoc citreum (strain KM20).